The sequence spans 215 residues: Ras-related protein Rab-5B (215 aa).

Position 2 is an N-acetylthreonine (threonine 2). Residues serine 29, alanine 30, glycine 32, lysine 33, serine 34, serine 35, histidine 46, glutamate 47, threonine 52, and glycine 78 each contribute to the GTP site. Mg(2+) is bound at residue serine 34. 2 short sequence motifs (switch) span residues 44 to 56 and 77 to 93; these read QFHE…IGAA and AGQE…YRGA. Mg(2+) is bound at residue threonine 52. Residue serine 84 is modified to Phosphoserine; by LRRK2. The GTP site is built by asparagine 133, lysine 134, aspartate 136, alanine 164, and lysine 165. A disordered region spans residues 186 to 215; that stretch reads PQNLGGAAGRSRGVDLHEQSQQNKSQCCSN. Low complexity predominate over residues 204–215; sequence QSQQNKSQCCSN. Residues cysteine 212 and cysteine 213 are each lipidated (S-geranylgeranyl cysteine).

Belongs to the small GTPase superfamily. Rab family. Binds EEA1. Interacts with RIN2 and RIN3, which probably regulate its pathway, possibly by acting as GEFs. Interacts with GDI1, GDI2, CHML and CHM; phosphorylation at Ser-84 disrupts this interaction. Mg(2+) serves as cofactor. Post-translationally, phosphorylation of Ser-84 in the switch II region by LRRK2 prevents the association of RAB regulatory proteins, including CHM, CHML and RAB GDP dissociation inhibitors GDI1 and GDI2. In terms of processing, (Microbial infection) Glycosylated on arginine residues by S.typhimurium protein Ssek3.

The protein resides in the cell membrane. It localises to the early endosome membrane. The protein localises to the melanosome. The enzyme catalyses GTP + H2O = GDP + phosphate + H(+). Regulated by guanine nucleotide exchange factors (GEFs) which promote the exchange of bound GDP for free GTP. Regulated by GTPase activating proteins (GAPs) which increase the GTP hydrolysis activity. Inhibited by GDP dissociation inhibitors (GDIs). In terms of biological role, the small GTPases Rab are key regulators of intracellular membrane trafficking, from the formation of transport vesicles to their fusion with membranes. Rabs cycle between an inactive GDP-bound form and an active GTP-bound form that is able to recruit to membranes different sets of downstream effectors directly responsible for vesicle formation, movement, tethering and fusion. This chain is Ras-related protein Rab-5B, found in Homo sapiens (Human).